An 833-amino-acid polypeptide reads, in one-letter code: G-type lectin S-receptor-like serine/threonine-protein kinase RKS1 (833 aa).

The signal sequence occupies residues 1 to 18 (MKVVFVIFFFFLFQFCIS). A Bulb-type lectin domain is found at 19–144 (VDTIMRRQSL…VTGRSFWESF (126 aa)). The Extracellular portion of the chain corresponds to 19–440 (VDTIMRRQSL…NGLSGKRRVL (422 aa)). N-linked (GlcNAc...) asparagine glycosylation is found at asparagine 79, asparagine 92, asparagine 100, asparagine 109, asparagine 228, and asparagine 256. An EGF-like domain is found at 280 to 330 (PKEQCDNYAHCGPNGYCDSPSSKTFECTCLPGFEPKFPRHWFLRDSSGGCT). 3 disulfides stabilise this stretch: cysteine 284–cysteine 296, cysteine 290–cysteine 306, and cysteine 308–cysteine 329. In terms of domain architecture, PAN spans 338-421 (CSEKDGFVKL…SGQDFYIRVD (84 aa)). N-linked (GlcNAc...) asparagine glycans are attached at residues asparagine 363 and asparagine 376. Disulfide bonds link cysteine 369–cysteine 396 and cysteine 373–cysteine 379. The chain crosses the membrane as a helical span at residues 441 to 461 (LILISLIAAVMLLTVILFCVV). The Cytoplasmic portion of the chain corresponds to 462–833 (RERRKSNRHR…DVTFSDIQGR (372 aa)). A Protein kinase domain is found at 515–800 (FSSQNKLGAG…NLPNPKHPAF (286 aa)). Residues 521-529 (LGAGGFGPV) and lysine 543 contribute to the ATP site. A phosphoserine mark is found at serine 549 and serine 564. A caM-binding region spans residues 604–621 (EQRAELDWPKRMEIVRGI). The Proton acceptor role is filled by aspartate 640. Serine 644 and serine 657 each carry phosphoserine. Threonine 674 carries the post-translational modification Phosphothreonine. Serine 717 and serine 821 each carry phosphoserine.

The protein belongs to the protein kinase superfamily. Ser/Thr protein kinase family.

It localises to the cell membrane. It carries out the reaction L-seryl-[protein] + ATP = O-phospho-L-seryl-[protein] + ADP + H(+). The catalysed reaction is L-threonyl-[protein] + ATP = O-phospho-L-threonyl-[protein] + ADP + H(+). This chain is G-type lectin S-receptor-like serine/threonine-protein kinase RKS1 (RKS1), found in Arabidopsis thaliana (Mouse-ear cress).